Consider the following 215-residue polypeptide: MPVILNFSSERVLSESELEALRHVGRVSQSEQLVVRGRTMRLHHISFMDSFSVEPVSGGLLDRLSARGHRLLAENLEIQLNRGHTFLQAFRLYMEQSRATPCTRQNVSSAIQNKINSHAFTVSHQDFSCHEQHLNCPITLCIPETGVFVRNAKNSEICSLYDHNALTELIRRNAPHPLSREPFVPEMIVSKDECHFNLIEQYFCILATQNICTRI.

Positions 136–189 (CPITLCIPETGVFVRNAKNSEICSLYDHNALTELIRRNAPHPLSREPFVPEMIV) are RING/U-box domain. The short motif at 213 to 215 (TRI) is the PDZ-binding motif element.

Belongs to the NleG E3 ligase family. In terms of assembly, interacts with host GOPC (human protein). Two sizes of protein are detected upon expression in C.rodentium; only the smaller protein is secreted.

Its subcellular location is the secreted. It is found in the host cytoplasm. It catalyses the reaction S-ubiquitinyl-[E2 ubiquitin-conjugating enzyme]-L-cysteine + [acceptor protein]-L-lysine = [E2 ubiquitin-conjugating enzyme]-L-cysteine + N(6)-ubiquitinyl-[acceptor protein]-L-lysine.. Functionally, effector proteins function to alter host cell physiology and promote bacterial survival in host tissues. This protein is an E3 ubiquitin-protein ligase that probably interferes with the host's ubiquitination pathway and targets host proteins for proteasomal degradation. Can ubiquitinate ubiquitin, giving rise to polyubiquitin chains (in vitro). Does not complement an nleG8 deletion in C.rodentium. The protein is E3 ubiquitin-protein ligase NleG of Escherichia coli O157:H7.